Here is a 281-residue protein sequence, read N- to C-terminus: MTSPSSRSVRPGSVVRTVRRHRGGRSATVQDMVAAEMPVAFIYNGVPFAVMMATPEDLEDFALGFSLSEGIVDHAQDLRVIAVETFLEGASLQIEIPPERAAALDQRRRNLDGRSGCGVCGNESIEAVLRVPPVLHSSLQIDVDALAHALDALHARQPIAAQTGAVHAAAWADAQGNVQLVREDVGRHNALDKLIGALARARIDASHGFAVVTSRASYEMAMKAAQARIPLLAAISAPTALAISLAESAGLTLIGFARDHDCVVYSHPQRLDLGVAVGEPA.

The active-site Cysteine persulfide intermediate is the cysteine 117.

Belongs to the FdhD family.

The protein resides in the cytoplasm. In terms of biological role, required for formate dehydrogenase (FDH) activity. Acts as a sulfur carrier protein that transfers sulfur from IscS to the molybdenum cofactor prior to its insertion into FDH. The polypeptide is Sulfur carrier protein FdhD (Xanthomonas euvesicatoria pv. vesicatoria (strain 85-10) (Xanthomonas campestris pv. vesicatoria)).